Reading from the N-terminus, the 559-residue chain is Transcription activator of gluconeogenesis ERT1-2 (559 aa).

The zn(2)-C6 fungal-type DNA-binding region spans 23–51 (CIHCQRTHLTCDNNRPCERCVARGFADTC). Disordered regions lie at residues 63-159 (DDKE…TPSQ), 231-263 (SNSL…TPSA), and 329-349 (AGQP…DSPS). 2 stretches are compositionally biased toward low complexity: residues 139–159 (QGPQ…TPSQ) and 231–244 (SNSL…QSPN). Positions 245-260 (THSPHNQDQPTPQAAT) are enriched in polar residues. Positions 440-512 (ALLEYQKFIS…ELFSRIAFGD (73 aa)) constitute a PAS domain.

Belongs to the ERT1/acuK family.

The protein localises to the nucleus. Transcription factor which regulates nonfermentable carbon utilization. Activator of gluconeogenetic genes. The sequence is that of Transcription activator of gluconeogenesis ERT1-2 (ERT1-2) from Yarrowia lipolytica (strain CLIB 122 / E 150) (Yeast).